The chain runs to 453 residues: Pup--protein ligase (453 aa).

Glu9 serves as a coordination point for Mg(2+). Position 53 (Arg53) interacts with ATP. Mg(2+) is bound at residue Tyr55. Asp57 functions as the Proton acceptor in the catalytic mechanism. Glu63 provides a ligand contact to Mg(2+). Positions 66 and 420 each coordinate ATP.

It belongs to the Pup ligase/Pup deamidase family. Pup-conjugating enzyme subfamily.

It carries out the reaction ATP + [prokaryotic ubiquitin-like protein]-L-glutamate + [protein]-L-lysine = ADP + phosphate + N(6)-([prokaryotic ubiquitin-like protein]-gamma-L-glutamyl)-[protein]-L-lysine.. The protein operates within protein degradation; proteasomal Pup-dependent pathway. It participates in protein modification; protein pupylation. Functionally, catalyzes the covalent attachment of the prokaryotic ubiquitin-like protein modifier Pup to the proteasomal substrate proteins, thereby targeting them for proteasomal degradation. This tagging system is termed pupylation. The ligation reaction involves the side-chain carboxylate of the C-terminal glutamate of Pup and the side-chain amino group of a substrate lysine. In Streptomyces coelicolor (strain ATCC BAA-471 / A3(2) / M145), this protein is Pup--protein ligase.